Consider the following 1093-residue polypeptide: Regulatory protein SWI4 (1093 aa).

In terms of domain architecture, HTH APSES-type spans 37–147 (IEIATYSETD…FQFDPNNPPP (111 aa)). A DNA-binding region (H-T-H motif) is located at residues 71 to 92 (ITQVFKIAQFSKTKRTKILEKE). The tract at residues 138–210 (FQFDPNNPPP…NQPNPSPLQN (73 aa)) is disordered. The segment covering 152-172 (NSILRKTSPGTKITSPSSYNK) has biased composition (polar residues). Low complexity predominate over residues 179–201 (SSSSTSATTTAANKKGKKNASIN). Serine 255 is subject to Phosphoserine. A compositionally biased stretch (low complexity) spans 448 to 457 (NSMNMSSRSM). The tract at residues 448 to 468 (NSMNMSSRSMTPFSAGNTSSQ) is disordered. A compositionally biased stretch (polar residues) spans 458-468 (TPFSAGNTSSQ). ANK repeat units follow at residues 520–549 (QGHT…NALQ) and 641–670 (IGNT…STDI). Serine 806 bears the Phosphoserine mark. Disordered stretches follow at residues 813-855 (RSQS…SSLL) and 973-1017 (QDEE…DAKF). Positions 818–837 (SDEKEKAKDNENQVEKKKDP) are enriched in basic and acidic residues. The span at 846-855 (PSLESPSSLL) shows a compositional bias: low complexity. The span at 1000–1010 (KSTSETSSPKN) shows a compositional bias: polar residues.

In terms of assembly, component of the transcription complex SCB-binding factor (SBF) composed of SWI6 and SWI4. Interacts with MSA2.

Part of a complex involved in cell-cycle-dependent transcription. SWI4 and SWI6 are required for formation of the cell-cycle box factor-DNA complex. The repeated element in the upstream region of HO (5'-CACGAAAA-3') is called the cell cycle box (CCB). The protein is Regulatory protein SWI4 (SWI4) of Saccharomyces cerevisiae (strain ATCC 204508 / S288c) (Baker's yeast).